The chain runs to 259 residues: Phosphatidylglycerol--prolipoprotein diacylglyceryl transferase (259 aa).

4 helical membrane-spanning segments follow: residues 9 to 29 (IIFS…VVGI), 55 to 75 (FITY…VLLY), 92 to 112 (EGGM…YLFC), and 117 to 137 (INFL…LFLG). R138 provides a ligand contact to a 1,2-diacyl-sn-glycero-3-phospho-(1'-sn-glycerol). Transmembrane regions (helical) follow at residues 172–192 (QLYE…YATF), 201–221 (GLNS…IEIF), and 228–248 (IGFI…MLLL).

This sequence belongs to the Lgt family.

Its subcellular location is the cell inner membrane. The catalysed reaction is L-cysteinyl-[prolipoprotein] + a 1,2-diacyl-sn-glycero-3-phospho-(1'-sn-glycerol) = an S-1,2-diacyl-sn-glyceryl-L-cysteinyl-[prolipoprotein] + sn-glycerol 1-phosphate + H(+). It functions in the pathway protein modification; lipoprotein biosynthesis (diacylglyceryl transfer). Its function is as follows. Catalyzes the transfer of the diacylglyceryl group from phosphatidylglycerol to the sulfhydryl group of the N-terminal cysteine of a prolipoprotein, the first step in the formation of mature lipoproteins. The polypeptide is Phosphatidylglycerol--prolipoprotein diacylglyceryl transferase (Rickettsia felis (strain ATCC VR-1525 / URRWXCal2) (Rickettsia azadi)).